The following is a 303-amino-acid chain: Protoheme IX farnesyltransferase (303 aa).

Transmembrane regions (helical) follow at residues 25 to 45 (MGLVQGNLIPAFAGSWLAIVL), 54 to 74 (IPQILLMLIGSTLIMGGACAL), 104 to 124 (LLILSFGMMVIGEIALFILNI), 125 to 145 (PSGVIGLMGIIGYVSFYSIWS), 151 to 171 (WNTVIGAFPGAVPPVIGWTAI), 179 to 199 (AIALFLVIFCWQPIHFYALAI), 228 to 248 (VWLILLLPLPFLLSDLGPVFI), and 280 to 300 (FVYSLNYLVLFFALVVIISLI).

Belongs to the UbiA prenyltransferase family. Protoheme IX farnesyltransferase subfamily. In terms of assembly, interacts with CtaA.

The protein resides in the cell membrane. The enzyme catalyses heme b + (2E,6E)-farnesyl diphosphate + H2O = Fe(II)-heme o + diphosphate. It participates in porphyrin-containing compound metabolism; heme O biosynthesis; heme O from protoheme: step 1/1. Its function is as follows. Converts heme B (protoheme IX) to heme O by substitution of the vinyl group on carbon 2 of heme B porphyrin ring with a hydroxyethyl farnesyl side group. This is Protoheme IX farnesyltransferase from Staphylococcus carnosus (strain TM300).